The sequence spans 124 residues: ATP synthase epsilon chain (124 aa).

The segment covering 99–118 has biased composition (basic and acidic residues); it reads LEQAKTEGDAHAERRADVRL. Positions 99-124 are disordered; the sequence is LEQAKTEGDAHAERRADVRLRAAAGR.

The protein belongs to the ATPase epsilon chain family. F-type ATPases have 2 components, CF(1) - the catalytic core - and CF(0) - the membrane proton channel. CF(1) has five subunits: alpha(3), beta(3), gamma(1), delta(1), epsilon(1). CF(0) has three main subunits: a, b and c.

The protein localises to the cell membrane. Its function is as follows. Produces ATP from ADP in the presence of a proton gradient across the membrane. The chain is ATP synthase epsilon chain (atpC) from Streptomyces coelicolor (strain ATCC BAA-471 / A3(2) / M145).